The sequence spans 478 residues: Transcript termination protein A18 (478 aa).

The Helicase ATP-binding domain occupies 98–254 (KVELKRPMYV…NDVINVSNSS (157 aa)). 111 to 118 (LACGFGKT) is an ATP binding site. The short motif at 204 to 207 (DESH) is the DESH box element. Residues 307-454 (ILDTIIYDFE…IITLAIEKLG (148 aa)) form the Helicase C-terminal domain.

Belongs to the helicase family. Poxviruses subfamily. In terms of assembly, interacts with G2. Might be part of a transcription complex composed at least of G2, A18, and H5.

Its subcellular location is the virion. DNA helicase which seems to act as a postreplicative transcription termination factor. Involved in ATP-dependent release of nascent RNA. Forms a stable complex with single-stranded DNA, and to a lesser extent RNA. The chain is Transcript termination protein A18 from Erythrocebus patas (Red guenon).